A 182-amino-acid polypeptide reads, in one-letter code: ATP synthase subunit b 1 (182 aa).

A helical transmembrane segment spans residues Phe24–Ile44.

It belongs to the ATPase B chain family. In terms of assembly, F-type ATPases have 2 components, F(1) - the catalytic core - and F(0) - the membrane proton channel. F(1) has five subunits: alpha(3), beta(3), gamma(1), delta(1), epsilon(1). F(0) has three main subunits: a(1), b(2) and c(10-14). The alpha and beta chains form an alternating ring which encloses part of the gamma chain. F(1) is attached to F(0) by a central stalk formed by the gamma and epsilon chains, while a peripheral stalk is formed by the delta and b chains.

The protein resides in the cell inner membrane. F(1)F(0) ATP synthase produces ATP from ADP in the presence of a proton or sodium gradient. F-type ATPases consist of two structural domains, F(1) containing the extramembraneous catalytic core and F(0) containing the membrane proton channel, linked together by a central stalk and a peripheral stalk. During catalysis, ATP synthesis in the catalytic domain of F(1) is coupled via a rotary mechanism of the central stalk subunits to proton translocation. Its function is as follows. Component of the F(0) channel, it forms part of the peripheral stalk, linking F(1) to F(0). The chain is ATP synthase subunit b 1 from Rhodospirillum rubrum (strain ATCC 11170 / ATH 1.1.1 / DSM 467 / LMG 4362 / NCIMB 8255 / S1).